Here is a 552-residue protein sequence, read N- to C-terminus: Glucose-6-phosphate isomerase (552 aa).

The Proton donor role is filled by Glu359. Residues His390 and Lys514 contribute to the active site.

It belongs to the GPI family.

The protein resides in the cytoplasm. The catalysed reaction is alpha-D-glucose 6-phosphate = beta-D-fructose 6-phosphate. Its pathway is carbohydrate biosynthesis; gluconeogenesis. The protein operates within carbohydrate degradation; glycolysis; D-glyceraldehyde 3-phosphate and glycerone phosphate from D-glucose: step 2/4. In terms of biological role, catalyzes the reversible isomerization of glucose-6-phosphate to fructose-6-phosphate. This chain is Glucose-6-phosphate isomerase, found in Streptomyces griseus subsp. griseus (strain JCM 4626 / CBS 651.72 / NBRC 13350 / KCC S-0626 / ISP 5235).